The chain runs to 197 residues: Recombination protein RecR (197 aa).

The C4-type zinc finger occupies 56-71 (CKRCGSYAETEICNIC). A Toprim domain is found at 79 to 174 (HTFCVVEQPE…DVTRIAYGIT (96 aa)).

The protein belongs to the RecR family.

Functionally, may play a role in DNA repair. It seems to be involved in an RecBC-independent recombinational process of DNA repair. It may act with RecF and RecO. In Leptospira borgpetersenii serovar Hardjo-bovis (strain JB197), this protein is Recombination protein RecR.